The primary structure comprises 363 residues: Homeobox protein DTH-2 (363 aa).

The segment at residues 133 to 192 (RRKRRILFSQAQIYELERRFKQQKYLSAPEREHLANLINLTPTQVKIWFQNHRYKCKRSQ) is a DNA-binding region (homeobox). The tract at residues 189-246 (KRSQKDKEKEQQKEKSYHLKKNIVDDKERSPNKQICNASSSDRSTPEEPVAKAKESGL) is disordered. Residues 191–219 (SQKDKEKEQQKEKSYHLKKNIVDDKERSP) show a composition bias toward basic and acidic residues. A compositionally biased stretch (polar residues) spans 220 to 231 (NKQICNASSSDR). Residues 232-246 (STPEEPVAKAKESGL) are compositionally biased toward basic and acidic residues.

The protein belongs to the NK-2 homeobox family. In terms of tissue distribution, intestine and unidentified peripheral parenchymal cells. Slightly higher levels in the cephalic region compared to other body regions.

Its subcellular location is the nucleus. This protein might be involved in determination and/or differentiation of nerve cells in the continuous replacement of neurons in the cephalic region. The polypeptide is Homeobox protein DTH-2 (DTH-2) (Girardia tigrina (Planarian)).